A 565-amino-acid chain; its full sequence is Estrogen receptor gamma (565 aa).

The segment at 1 to 168 is modulating; it reads MAVASSPEKD…TSGGKTDLHY (168 aa). 2 consecutive NR C4-type zinc fingers follow at residues 169–189 and 205–229; these read CAVC…CEGC and CPAT…LRKC. Positions 169-234 form a DNA-binding region, nuclear receptor; the sequence is CAVCHDYASG…RLRKCYEVGM (66 aa). The interval 235-285 is hinge; the sequence is TKCGMRKERGNYRSPQMRRMTRLTSQGRTDSSSVLTGSAVVSLNAPQPSAL. The NR LBD domain occupies 286–516; it reads TSEQLIERLM…DLLLEMLDAH (231 aa). The interval 522 to 565 is disordered; it reads RLPRRSPEQEPEDQADAPAPPHSSGSGPSYTWTPSSSEGAGEPQ.

It belongs to the nuclear hormone receptor family. NR3 subfamily. In terms of assembly, homodimer. Abundant in the ovary and testes, barely detectable in the brain and muscle and undetectable in the liver.

Its subcellular location is the nucleus. The steroid hormones and their receptors are involved in the regulation of eukaryotic gene expression and affect cellular proliferation and differentiation in target tissues. This is Estrogen receptor gamma (esr3) from Micropogonias undulatus (Atlantic croaker).